Here is a 268-residue protein sequence, read N- to C-terminus: Small ribosomal subunit protein uS2 (268 aa).

This sequence belongs to the universal ribosomal protein uS2 family.

In Caulobacter vibrioides (strain ATCC 19089 / CIP 103742 / CB 15) (Caulobacter crescentus), this protein is Small ribosomal subunit protein uS2.